We begin with the raw amino-acid sequence, 785 residues long: B-cell scaffold protein with ankyrin repeats (785 aa).

The tract at residues 1–154 is interaction with ITPR2; sequence MLPAAPGKGL…DYISVIQSII (154 aa). One can recognise a TIR domain in the interval 25-153; it reads NTKDIIMIYE…EDYISVIQSI (129 aa). The DBB domain maps to 200–327; sequence VLPTEIPCEN…EIPYYEFQSL (128 aa). ANK repeat units lie at residues 342 to 371 and 378 to 408; these read ELPT…ATWA and EGSD…EIDI. Disordered stretches follow at residues 433–480, 493–514, 538–578, and 606–625; these read PAFH…SESS, GADP…LPPP, QMER…EDPY, and FIIN…PPKE. Positions 553-568 are enriched in basic and acidic residues; the sequence is ETGDEPKGEKEKKEEE. Residues 569–578 show a composition bias toward acidic residues; that stretch reads KEQEEEEDPY. Positions 611–621 are enriched in pro residues; sequence PPAPTPRPTSI.

In terms of assembly, interacts with LYN, ITPR1 and ITPR2. In terms of processing, phosphorylated on tyrosines upon BCR activation. As to expression, expressed in B-cell but not T-cell or myeloid cell lines. Highest expression in CD19(+) B-cells, with very low expression in other cell populations.

Functionally, involved in B-cell receptor (BCR)-induced Ca(2+) mobilization from intracellular stores. Promotes Lyn-mediated phosphorylation of IP3 receptors 1 and 2. In Homo sapiens (Human), this protein is B-cell scaffold protein with ankyrin repeats (BANK1).